We begin with the raw amino-acid sequence, 563 residues long: Phospholipase B-like protein F (563 aa).

The first 21 residues, 1–21 (MKIINSFVFIFVLLFVFNTNA), serve as a signal peptide directing secretion. N-linked (GlcNAc...) asparagine glycosylation is found at Asn-85, Asn-107, Asn-118, Asn-121, Asn-208, Asn-312, and Asn-537.

Belongs to the phospholipase B-like family.

The protein resides in the secreted. Functionally, probable phospholipase. The chain is Phospholipase B-like protein F (plbF) from Dictyostelium discoideum (Social amoeba).